We begin with the raw amino-acid sequence, 273 residues long: NADPH-dependent 7-cyano-7-deazaguanine reductase (273 aa).

80–82 lines the substrate pocket; that stretch reads IES. 82 to 83 contacts NADPH; that stretch reads SK. Residue C180 is the Thioimide intermediate of the active site. D187 functions as the Proton donor in the catalytic mechanism. Residue 219 to 220 participates in substrate binding; it reads HE. 248-249 contributes to the NADPH binding site; that stretch reads RG.

The protein belongs to the GTP cyclohydrolase I family. QueF type 2 subfamily. Homodimer.

Its subcellular location is the cytoplasm. It catalyses the reaction 7-aminomethyl-7-carbaguanine + 2 NADP(+) = 7-cyano-7-deazaguanine + 2 NADPH + 3 H(+). Its pathway is tRNA modification; tRNA-queuosine biosynthesis. Functionally, catalyzes the NADPH-dependent reduction of 7-cyano-7-deazaguanine (preQ0) to 7-aminomethyl-7-deazaguanine (preQ1). The polypeptide is NADPH-dependent 7-cyano-7-deazaguanine reductase (Bordetella avium (strain 197N)).